A 1136-amino-acid polypeptide reads, in one-letter code: MSTTRPRAATHSASSGSVSRSSKHSARVITQTPVDAKLQAEFEGSVHSFDYTKSIDISGDSSSVPSETVKAYLQRLQKEMLIQPFGCVLAVEEGSCAVVGYSENAPEMLDVVGGAHAVPSIGGQQQEGGGGGGGLLRIGMDARTLFKPASAAALQKAATFADMHLVNPIFVRCNRSGKPFYAILNRIDAGLVIDFEPVMPSDVPVSAAGALQSYKLAAKAISRLQSLPGGDIRLLCDTVVQEVRELTGYDRVMAYRFHEDEHGEVVAEMRRPDLEPYLGLHYPATDIPQASRFLFMKNRVRMICDCCAPPVNVIQDKRLRQPLSLCGSTLRAPHGCHAQYMANMGSIASLVMSVTTNENGDDSEGGGQQQPQNRRKLWGLVVCHHTSPRVIPFPLRYACEFLMQVFGIQLNKEVELAAQLREKHILRVQPVLCDMLLRDAPVGIVSQTPNIMDLVKCDGAALLYGKRLWLLGTTPTEAQILDIADWLLEHHRDSTGLSTDSLAEAGYPGAASLGDAVCGIAAARITSKDFLFWFRSHTAKEIIWGGAKHDPNDKDDGRRMHPRSSFKAFLEVVKRRSLPWEDVEMDAIHSLQLILRDSFHDIDDSDSKTMIHARLNDLRLQGIDELSAVTNEMVRLIETATVPILAIDSNGLVNGWNTKAAELTGLLADEVIGRPLIDLVQHDSVEIVKKMLYLALQGEEEQNVEIKLKTFGIQEEKGPVVLIVNACSSRDLEENVVGVCFVAQDVTWQRIAMDKFTHLQGDYRAIVQNPNPLIPPIFGADEYGYCSEWNPAMEKLTGWKREEVIGKMLVGEVFGIHRMSCQLKGQDGLTKLRIVLNNAMAGKETEKFPFSFFDRHGKNTEALLSANKRTDAEGIITGVFCFLHVTSTELQQALQVQRMAEQAAMDRLKELAYIRQEIRNPLYGIIFTRKLMESTDLSEEQKQIVQTSALCQRQLVKVLDDADLESIEDGYLELDTIEFTLGTVLDAVVSQGMILSREKGLQLIRDSPEEIKTMCLYGDQLRLQQILSNFLINALRFSTSEGWVGNKVVPTKRHLGSGVNVMHMEFRITHSGQGIPEELIKEMFVHNQDMFQEGLGLYMCQQLVKIMNGDVQYLREAGRSSFIINVEFPLAQTDKQ.

The segment at 1–28 is disordered; the sequence is MSTTRPRAATHSASSGSVSRSSKHSARV. Low complexity predominate over residues 11 to 20; the sequence is HSASSGSVSR. A GAF domain is found at 231 to 414; the sequence is DIRLLCDTVV…VFGIQLNKEV (184 aa). Cys336 contacts phytochromobilin. PAS domains lie at 629-699 and 762-833; these read VTNE…LQGE and DYRA…TKLR. Positions 913 to 1132 constitute a Histidine kinase domain; the sequence is YIRQEIRNPL…IINVEFPLAQ (220 aa).

This sequence belongs to the phytochrome family. Homodimer. Contains one covalently linked phytochromobilin chromophore.

Its function is as follows. Regulatory photoreceptor which exists in two forms that are reversibly interconvertible by light: the Pr form that absorbs maximally in the red region of the spectrum and the Pfr form that absorbs maximally in the far-red region. Photoconversion of Pr to Pfr induces an array of morphogenic responses, whereas reconversion of Pfr to Pr cancels the induction of those responses. Pfr controls the expression of a number of nuclear genes including those encoding the small subunit of ribulose-bisphosphate carboxylase, chlorophyll A/B binding protein, protochlorophyllide reductase, rRNA, etc. It also controls the expression of its own gene(s) in a negative feedback fashion. In Picea abies (Norway spruce), this protein is Phytochrome.